A 619-amino-acid polypeptide reads, in one-letter code: DNA mismatch repair protein MutL (619 aa).

It belongs to the DNA mismatch repair MutL/HexB family.

This protein is involved in the repair of mismatches in DNA. It is required for dam-dependent methyl-directed DNA mismatch repair. May act as a 'molecular matchmaker', a protein that promotes the formation of a stable complex between two or more DNA-binding proteins in an ATP-dependent manner without itself being part of a final effector complex. The protein is DNA mismatch repair protein MutL of Shewanella frigidimarina (strain NCIMB 400).